A 148-amino-acid chain; its full sequence is UPF0756 membrane protein YeaL (148 aa).

4 helical membrane passes run 14–34 (ALGFISHNTTVAVSILVLIIV), 51–71 (LSIGIIILTIGIMAPIASGTL), 86–106 (LVAIAVGVIVSWLGGRGVTLM), and 121–141 (VLGVALFRGVPVGPLIAAGLV).

It belongs to the UPF0756 family.

Its subcellular location is the cell membrane. This chain is UPF0756 membrane protein YeaL, found in Escherichia coli O127:H6 (strain E2348/69 / EPEC).